The primary structure comprises 2332 residues: Genome polyprotein (2332 aa).

A Peptidase C28 domain is found at 1-201 (MHTTDCFIAL…WKAMVQRKLK (201 aa)). Residues 1-1480 (MHTTDCFIAL…SFVKRAFKRL (1480 aa)) lie on the Cytoplasmic side of the membrane. Residues C51, H148, and D163 each act as for leader protease activity in the active site. 2 disordered regions span residues 199-218 (KLKG…QSGN) and 238-265 (QLGD…NTQN). G202 carries N-myristoyl glycine; by host lipidation. Polar residues-rich tracts occupy residues 204 to 218 (GQSS…QSGN) and 238 to 251 (QLGD…SNEG). The span at 252 to 265 (STDTTSTHTTNTQN) shows a compositional bias: low complexity. Residues 789–797 (ALLRAATYY) form an antigenic epitope region. The short motif at 868–870 (RGD) is the Cell attachment site element. An SF3 helicase domain is found at 1189 to 1353 (NVHIANLCKV…DGYKINNKLD (165 aa)). 1217-1224 (GKSGQGKS) provides a ligand contact to ATP. An intramembrane segment occupies 1481 to 1501 (KENFEIVALCLTLLANIVIMI). Residues 1502–2332 (RETRKRQKMV…RWVNAVCGDA (831 aa)) lie on the Cytoplasmic side of the membrane. Composition is skewed to basic and acidic residues over residues 1529-1538 (KTLDEAEKNP) and 1549-1563 (FRER…RDDV). The interval 1529-1584 (KTLDEAEKNPLETSGASTVGFRERTLPGQKARDDVNSEPAQPAEEQPQAEGPYAGP) is disordered. Positions 1566–1578 (EPAQPAEEQPQAE) are enriched in low complexity. O-(5'-phospho-RNA)-tyrosine is present on residues Y1581, Y1604, and Y1628. Positions 1652–1848 (APPTDLQKMV…YCSCVSRSML (197 aa)) constitute a Peptidase C3 domain. Residue H1695 is the For protease 3C activity; Proton donor/acceptor of the active site. Active-site for protease 3C activity residues include D1733 and C1812. Residues 1878–1886 (MRKTKLAPT) carry the Nuclear localization signal motif. Residues 2096–2214 (RNVWDVDYSA…ASDYDLDFEA (119 aa)) form the RdRp catalytic domain. The active-site For RdRp activity is D2200.

It belongs to the picornaviruses polyprotein family. As to quaternary structure, interacts with host ISG15. Capsid protein VP1: Interacts (via R-G-D motif) with host ITGAV/ITGB6. Interacts (via R-G-D motif) with host ITGAV/ITGB6. Interacts with host MAVS; this interaction inhibits binding of host TRAF3 to MAVS, thereby suppressing interferon-mediated responses. In terms of assembly, forms homooligomers. As to quaternary structure, homohexamer. Interacts with host VIM. Interacts with host BECN1. Interacts with host DCTN3. In terms of assembly, interacts with RNA-dependent RNA polymerase; this interaction allows 3B-1 to binds 2 polymerases and act as a primer. It also allows the recruitment of the RNA-dependent RNA polymerase to host membranes. As to quaternary structure, interacts with RNA-dependent RNA polymerase; this interaction allows 3B-2 to act as a primer. Interacts with RNA-dependent RNA polymerase; this interaction allows 3B-3 to act as a primer. In terms of assembly, interacts with 3B-1; this interaction allows 3B-1 to binds 2 polymerases and act as a primer. It also allows the recruitment of the RNA-dependent RNA polymerase to host membranes. Interacts with 3B-2; this interaction allows 3B-2 to act as a primer. Interacts with 3B-3; this interaction allows 3B-3 to act as a primer. Post-translationally, removes six residues from its own C-terminus, generating sLb(pro). Specific enzymatic cleavages in vivo by the viral proteases yield a variety of precursors and mature proteins. The polyprotein seems to be cotranslationally cleaved at the 2A/2B junction by a ribosomal skip from one codon to the next without formation of a peptide bond. This process would release the L-P1-2A peptide from the translational complex. In terms of processing, during virion maturation, immature virions are rendered infectious following cleavage of VP0 into VP4 and VP2. This maturation seems to be an autocatalytic event triggered by the presence of RNA in the capsid and is followed by a conformational change of the particle. Post-translationally, myristoylation is required during RNA encapsidation and formation of the mature virus particle. Uridylylated by the polymerase and covalently linked to the 5'-end of genomic RNA. These uridylylated forms act as a nucleotide-peptide primer for the polymerase.

The protein resides in the host nucleus. Its subcellular location is the host cytoplasm. It is found in the virion. It localises to the host endoplasmic reticulum membrane. The protein localises to the host cytoplasmic vesicle membrane. It catalyses the reaction Autocatalytically cleaves itself from the polyprotein of the foot-and-mouth disease virus by hydrolysis of a Lys-|-Gly bond, but then cleaves host cell initiation factor eIF-4G at bonds -Gly-|-Arg- and -Lys-|-Arg-.. The catalysed reaction is a ribonucleoside 5'-triphosphate + H2O = a ribonucleoside 5'-diphosphate + phosphate + H(+). The enzyme catalyses RNA(n) + a ribonucleoside 5'-triphosphate = RNA(n+1) + diphosphate. It carries out the reaction Selective cleavage of Gln-|-Gly bond in the poliovirus polyprotein. In other picornavirus reactions Glu may be substituted for Gln, and Ser or Thr for Gly.. Autocatalytically cleaves itself from the polyprotein at the L/VP0 junction. Also cleaves the host translation initiation factors EIF4G1 and EIF4G3, in order to shut off the capped cellular mRNA transcription. Plays a role in counteracting host innate antiviral response using diverse mechanisms. Possesses a deubiquitinase activity acting on both 'Lys-48' and 'Lys-63'-linked polyubiquitin chains. In turn, inhibits the ubiquitination and subsequent activation of key signaling molecules of type I IFN response such as host RIGI, TBK1, TRAF3 and TRAF6. Inhibits host NF-kappa-B activity by inducing a decrease in RELA mRNA levels. Cleaves a peptide bond in the C-terminus of host ISG15, resulting in the damaging of this modifier that can no longer be attached to target proteins. Also cleaves host G3BP1 and G3BP2 in order to inhibit cytoplasmic stress granules assembly. In terms of biological role, lies on the inner surface of the capsid shell. After binding to the host receptor, the capsid undergoes conformational changes. Capsid protein VP4 is released, capsid protein VP1 N-terminus is externalized, and together, they shape a pore in the host membrane through which the viral genome is translocated into the host cell cytoplasm. After genome has been released, the channel shrinks. Functionally, forms an icosahedral capsid of pseudo T=3 symmetry with capsid proteins VP1 and VP3. The capsid is composed of 60 copies of each capsid protein organized in the form of twelve pentamers and encloses the viral positive strand RNA genome. Upon acidifcation in the endosome, dissociates into pentamers. Its function is as follows. Forms an icosahedral capsid of pseudo T=3 symmetry with capsid proteins VP0 and VP3. The capsid is composed of 60 copies of each capsid protein organized in the form of twelve pentamers and encloses the viral positive strand RNA genome. Upon acidifcation in the endosome, dissociates into pentamers. Forms an icosahedral capsid of pseudo T=3 symmetry with capsid proteins VP2 and VP3. The capsid is composed of 60 copies of each capsid protein organized in the form of twelve pentamers and encloses the viral positive strand RNA genome. Mediates cell entry by attachment to an integrin receptor, usually host ITGAV/ITGB6. In addition, targets host MAVS to suppress type I IFN pathway. Upon acidifcation in the endosome, dissociates into pentamers. In terms of biological role, mediates self-processing of the polyprotein by a translational effect termed 'ribosome skipping'. Mechanistically, 2A-mediated cleavage occurs between the C-terminal glycine and the proline of the downstream protein 2B. In the case of foot-and-mouth disease virus, the 2A oligopeptide is post-translationally 'trimmed' from the C-terminus of the upstream protein 1D by 3C proteinase. Functionally, plays an essential role in the virus replication cycle by acting as a viroporin. Creates a pore in the host endoplasmic reticulum and as a consequence releases Ca2+ in the cytoplasm of infected cell. In turn, high levels of cytoplasmic calcium may trigger membrane trafficking and transport of viral ER-associated proteins to viroplasms, sites of viral genome replication. Its function is as follows. Associates with and induces structural rearrangements of intracellular membranes. Triggers host autophagy by interacting with host BECN1 and thereby promotes viral replication. Participates in viral replication and interacts with host DHX9. Displays RNA-binding, nucleotide binding and NTPase activities. May play a role in virion morphogenesis and viral RNA encapsidation by interacting with the capsid protein VP3. Plays important roles in virus replication, virulence and host range. Cooperates with host DDX56 to inhibit IRF3 nuclear translocation and subsequent type I interferon production. In terms of biological role, covalently linked to the 5'-end of both the positive-strand and negative-strand genomic RNAs. Acts as a genome-linked replication primer. Functionally, cysteine protease that generates mature viral proteins from the precursor polyprotein. In addition to its proteolytic activity, binds to viral RNA and thus influences viral genome replication. RNA and substrate bind cooperatively to the protease. Its function is as follows. RNA-directed RNA polymerase 3D-POL replicates genomic and antigenomic RNA by recognizing replications specific signals. Covalently attaches UMP to a tyrosine of VPg, which is used to prime RNA synthesis. The positive stranded RNA genome is first replicated at virus induced membranous vesicles, creating a dsRNA genomic replication form. This dsRNA is then used as template to synthesize positive stranded RNA genomes. ss(+)RNA genomes are either translated, replicated or encapsidated. This Foot-and-mouth disease virus (isolate -/Germany/A5Westerwald/1951 serotype A) (FMDV) protein is Genome polyprotein.